A 347-amino-acid polypeptide reads, in one-letter code: MSVMFDPDTAIYPFPPKPTPLSIDEKAYYREKIKRLLKERNAVMVAHYYTDPEIQQLAEETGGCISDSLEMARFGAKHPASTLLVAGVRFMGETAKILSPEKTILMPTLQAECSLDLGCPVEEFNAFCDAHPDRTVVVYANTSAAVKARADWVVTSSIAVELIDHLDSLGEKIIWAPDKHLGRYVQKQTGGDILCWQGACIVHDEFKTQALTRLQEEYPDAAILVHPESPQAIVDMADAVGSTSQLIAAAKTLPHQRLIVATDRGIFYKMQQAVPDKELLEAPTAGEGATCRSCAHCPWMAMNGLQSIAEALEQEGSNHEVHVDERLRERALVPLNRMLDFAATLRG.

Iminosuccinate is bound by residues His-47 and Ser-68. Cys-113 is a binding site for [4Fe-4S] cluster. Iminosuccinate contacts are provided by residues Tyr-139–Asn-141 and Ser-156. Cys-200 provides a ligand contact to [4Fe-4S] cluster. Residues His-226–Glu-228 and Thr-243 each bind iminosuccinate. A [4Fe-4S] cluster-binding site is contributed by Cys-297.

This sequence belongs to the quinolinate synthase family. Type 1 subfamily. The cofactor is [4Fe-4S] cluster.

The protein resides in the cytoplasm. The enzyme catalyses iminosuccinate + dihydroxyacetone phosphate = quinolinate + phosphate + 2 H2O + H(+). It functions in the pathway cofactor biosynthesis; NAD(+) biosynthesis; quinolinate from iminoaspartate: step 1/1. Its function is as follows. Catalyzes the condensation of iminoaspartate with dihydroxyacetone phosphate to form quinolinate. This chain is Quinolinate synthase, found in Escherichia coli O139:H28 (strain E24377A / ETEC).